The chain runs to 247 residues: MFRSLLKRTTFLNQLNKSNGFNRNYFKQSTLTRSDALSRHVETEDNNEHTPFDFTQENLVKVEKILAKYPKQYRQSALIPLLDLAQRQNGGWISLRAMDKVAHICGIAPMTAYEVASFYTMFNRTKIGENFVQVCTTTPCMLRGSGEIIKTCKSHLGIQVGETTPDNKFTLVEVECLGACVNAPMMCINDDFYEDLTSASTINLLDQIKNNKPTKIGPQTHRKAAEGPQGKTTLLEPPVGPTCRDDL.

The N-terminal 40 residues, 1–40 (MFRSLLKRTTFLNQLNKSNGFNRNYFKQSTLTRSDALSRH), are a transit peptide targeting the mitochondrion. Cysteine 135, cysteine 140, cysteine 176, and cysteine 180 together coordinate [2Fe-2S] cluster. Positions 211–247 (NKPTKIGPQTHRKAAEGPQGKTTLLEPPVGPTCRDDL) are disordered.

This sequence belongs to the complex I 24 kDa subunit family. As to quaternary structure, complex I is composed of 45 different subunits. This is a component of the flavoprotein-sulfur (FP) fragment of the enzyme. [2Fe-2S] cluster is required as a cofactor.

The protein resides in the mitochondrion inner membrane. It catalyses the reaction a ubiquinone + NADH + 5 H(+)(in) = a ubiquinol + NAD(+) + 4 H(+)(out). Its function is as follows. Core subunit of the mitochondrial membrane respiratory chain NADH dehydrogenase (Complex I) that is believed to belong to the minimal assembly required for catalysis. Complex I functions in the transfer of electrons from NADH to the respiratory chain. The immediate electron acceptor for the enzyme is believed to be ubiquinone. The protein is NADH dehydrogenase [ubiquinone] flavoprotein 2, mitochondrial (ndufv2) of Dictyostelium discoideum (Social amoeba).